A 270-amino-acid chain; its full sequence is Glutamate 5-kinase (270 aa).

Lysine 17 lines the ATP pocket. The substrate site is built by serine 57, aspartate 144, and asparagine 160. ATP-binding positions include 180-181 (SD) and 222-228 (TGGMTSK).

This sequence belongs to the glutamate 5-kinase family.

It is found in the cytoplasm. It carries out the reaction L-glutamate + ATP = L-glutamyl 5-phosphate + ADP. The protein operates within amino-acid biosynthesis; L-proline biosynthesis; L-glutamate 5-semialdehyde from L-glutamate: step 1/2. In terms of biological role, catalyzes the transfer of a phosphate group to glutamate to form L-glutamate 5-phosphate. In Lactococcus lactis subsp. cremoris (strain SK11), this protein is Glutamate 5-kinase.